The sequence spans 330 residues: Protein ANTHESIS POMOTING FACTOR 1 (330 aa).

WD repeat units follow at residues 22–61 (DFGG…QLKI), 112–151 (GHKD…CQGI), 153–191 (HLRG…KGPF), 198–237 (GDTA…KKCG), 242–281 (PSQG…EVAR), and 284–323 (NNIG…APAD).

It belongs to the WD repeat SWD2 family. As to expression, expressed in the shoot apical meristem (SAM), embryos, seedlings, cotyledons, leaves primordia, young leaves and roots.

It localises to the nucleus. In terms of biological role, component of a chromatin regulatory complex involved in regulating chromatin structure in the nucleus. Promotes flowering under long days (LD) via the regulation of bolting. The sequence is that of Protein ANTHESIS POMOTING FACTOR 1 from Arabidopsis thaliana (Mouse-ear cress).